The following is a 338-amino-acid chain: Fructose-1,6-bisphosphatase class 1 (338 aa).

Positions 92, 115, 117, and 118 each coordinate Mg(2+). Residues 118–121 (DGSS), Asn211, Tyr244, and Lys274 contribute to the substrate site. Glu280 serves as a coordination point for Mg(2+).

Belongs to the FBPase class 1 family. As to quaternary structure, homotetramer. Mg(2+) is required as a cofactor.

It localises to the cytoplasm. It carries out the reaction beta-D-fructose 1,6-bisphosphate + H2O = beta-D-fructose 6-phosphate + phosphate. It functions in the pathway carbohydrate biosynthesis; gluconeogenesis. In Photobacterium profundum (strain SS9), this protein is Fructose-1,6-bisphosphatase class 1.